Reading from the N-terminus, the 106-residue chain is ATP-dependent Clp protease adapter protein ClpS (106 aa).

The protein belongs to the ClpS family. As to quaternary structure, binds to the N-terminal domain of the chaperone ClpA.

Involved in the modulation of the specificity of the ClpAP-mediated ATP-dependent protein degradation. The chain is ATP-dependent Clp protease adapter protein ClpS from Aliivibrio salmonicida (strain LFI1238) (Vibrio salmonicida (strain LFI1238)).